We begin with the raw amino-acid sequence, 159 residues long: Cyclic pyranopterin monophosphate synthase (159 aa).

Residues 76-78 and 114-115 contribute to the substrate site; these read LCH and ME. The active site involves Asp129.

It belongs to the MoaC family. In terms of assembly, homohexamer; trimer of dimers.

The enzyme catalyses (8S)-3',8-cyclo-7,8-dihydroguanosine 5'-triphosphate = cyclic pyranopterin phosphate + diphosphate. It participates in cofactor biosynthesis; molybdopterin biosynthesis. Catalyzes the conversion of (8S)-3',8-cyclo-7,8-dihydroguanosine 5'-triphosphate to cyclic pyranopterin monophosphate (cPMP). The protein is Cyclic pyranopterin monophosphate synthase of Psychromonas ingrahamii (strain DSM 17664 / CCUG 51855 / 37).